A 124-amino-acid chain; its full sequence is Glutaredoxin-2 (124 aa).

Cys13 and Cys16 form a disulfide bridge.

It belongs to the glutaredoxin family. In terms of assembly, homodimer.

It localises to the host cytoplasm. Glutaredoxin necessary for virion morphogenesis and virus replication. Functions as a thiol-disulfide transfer protein between membrane-associated OPG128 and substrates OPG095 or OPG053. The complete pathway for formation of disulfide bonds in intracellular virion membrane proteins sequentially involves oxidation of OPG072, OPG128 and OPG088. Exhibit thioltransferase and dehydroascorbate reductase activities in vitro. This Bos taurus (Bovine) protein is Glutaredoxin-2 (OPG088).